A 323-amino-acid chain; its full sequence is Glucokinase (323 aa).

8 to 13 (GDVGGT) lines the ATP pocket.

Belongs to the bacterial glucokinase family.

The protein resides in the cytoplasm. It catalyses the reaction D-glucose + ATP = D-glucose 6-phosphate + ADP + H(+). In Yersinia enterocolitica serotype O:8 / biotype 1B (strain NCTC 13174 / 8081), this protein is Glucokinase.